A 64-amino-acid polypeptide reads, in one-letter code: Cytochrome c oxidase subunit 5C-2 (64 aa).

The chain crosses the membrane as a helical span at residues 15–34; the sequence is SVVKELIIGLTLGLAAGGLW.

This sequence belongs to the cytochrome c oxidase subunit 5C family.

It localises to the mitochondrion inner membrane. Functionally, this protein is one of the nuclear-coded polypeptide chains of cytochrome c oxidase, the terminal oxidase in mitochondrial electron transport. The protein is Cytochrome c oxidase subunit 5C-2 of Arabidopsis thaliana (Mouse-ear cress).